The primary structure comprises 971 residues: Breast cancer type 2 susceptibility protein homolog (971 aa).

A compositionally biased stretch (polar residues) spans 1-15; sequence MDQNGASGSHPNRLS. 4 disordered regions span residues 1–30, 130–155, 349–395, and 420–466; these read MDQNGASGSHPNRLSQGRGAHARERGATVS, SRKRDPKSHKAVQNEKRRGSSGLSVQ, KLKL…DQPN, and MQCS…SSHQ. Residues 130–139 are compositionally biased toward basic residues; that stretch reads SRKRDPKSHK. Basic and acidic residues predominate over residues 349-364; that stretch reads KLKLEPSSQKEQKSSK. 3 stretches are compositionally biased toward polar residues: residues 375–392, 420–432, and 453–466; these read SKQSCDINTKNEGTTILD, MQCSNGPSTSKNA, and KQTPNKSQTISSHQ. 3 BRCA2 repeats span residues 570–604, 671–705, and 746–780; these read AEPEFCGFRTASNKAIPISEKMKIKTAEFMAEFQS, NESQFFGFRTASNKAIEITEAMEKRGAMFLAQSKA, and SETEFFGFRTASNKGIVISENTKIKVAQFMSEFQA. Residues 916-971 are disordered; the sequence is MERFAPKPSSTSTPLADRDLNRSKDCTKNRQDAEDMSPICMQPKKSRRLGLSRSRY. Basic and acidic residues predominate over residues 931–948; sequence ADRDLNRSKDCTKNRQDA. Residues 959–971 are compositionally biased toward basic residues; sequence KKSRRLGLSRSRY.

Interacts with Rad9. Interacts with spn-A/Rad51. Interacts with cyclin CycG.

The protein localises to the nucleus. Involved in and required for double-strand break repair by meiotic and mitotic homologous recombination. During meiosis, has a dual role in the repair of meiotic double-stranded breaks and the efficient activation of the meiotic recombination checkpoint. This chain is Breast cancer type 2 susceptibility protein homolog, found in Drosophila melanogaster (Fruit fly).